We begin with the raw amino-acid sequence, 432 residues long: Glutamate-1-semialdehyde 2,1-aminomutase (432 aa).

Residue lysine 272 is modified to N6-(pyridoxal phosphate)lysine.

This sequence belongs to the class-III pyridoxal-phosphate-dependent aminotransferase family. HemL subfamily. As to quaternary structure, homodimer. Pyridoxal 5'-phosphate serves as cofactor.

The protein resides in the cytoplasm. It catalyses the reaction (S)-4-amino-5-oxopentanoate = 5-aminolevulinate. The protein operates within porphyrin-containing compound metabolism; protoporphyrin-IX biosynthesis; 5-aminolevulinate from L-glutamyl-tRNA(Glu): step 2/2. Its pathway is porphyrin-containing compound metabolism; chlorophyll biosynthesis. In Nostoc sp. (strain PCC 7120 / SAG 25.82 / UTEX 2576), this protein is Glutamate-1-semialdehyde 2,1-aminomutase.